The following is a 161-amino-acid chain: ATP synthase subunit b 1 (161 aa).

Residues Glu5–Phe25 form a helical membrane-spanning segment.

It belongs to the ATPase B chain family. F-type ATPases have 2 components, F(1) - the catalytic core - and F(0) - the membrane proton channel. F(1) has five subunits: alpha(3), beta(3), gamma(1), delta(1), epsilon(1). F(0) has three main subunits: a(1), b(2) and c(10-14). The alpha and beta chains form an alternating ring which encloses part of the gamma chain. F(1) is attached to F(0) by a central stalk formed by the gamma and epsilon chains, while a peripheral stalk is formed by the delta and b chains.

It localises to the cell inner membrane. In terms of biological role, f(1)F(0) ATP synthase produces ATP from ADP in the presence of a proton or sodium gradient. F-type ATPases consist of two structural domains, F(1) containing the extramembraneous catalytic core and F(0) containing the membrane proton channel, linked together by a central stalk and a peripheral stalk. During catalysis, ATP synthesis in the catalytic domain of F(1) is coupled via a rotary mechanism of the central stalk subunits to proton translocation. Its function is as follows. Component of the F(0) channel, it forms part of the peripheral stalk, linking F(1) to F(0). The sequence is that of ATP synthase subunit b 1 from Methylobacterium sp. (strain 4-46).